We begin with the raw amino-acid sequence, 213 residues long: Large ribosomal subunit protein uL3 (213 aa).

It belongs to the universal ribosomal protein uL3 family. As to quaternary structure, part of the 50S ribosomal subunit. Forms a cluster with proteins L14 and L19.

In terms of biological role, one of the primary rRNA binding proteins, it binds directly near the 3'-end of the 23S rRNA, where it nucleates assembly of the 50S subunit. The sequence is that of Large ribosomal subunit protein uL3 from Bifidobacterium longum subsp. infantis (strain ATCC 15697 / DSM 20088 / JCM 1222 / NCTC 11817 / S12).